The following is a 259-amino-acid chain: UPF0246 protein NMB0895 (259 aa).

This sequence belongs to the UPF0246 family.

The polypeptide is UPF0246 protein NMB0895 (Neisseria meningitidis serogroup B (strain ATCC BAA-335 / MC58)).